A 472-amino-acid chain; its full sequence is MDKLGQIIKLGQLIYEQCEKMKYCRKQCQRLGNRVHGLLQPLQRLQAQGKKNLPDDITAALGRFDEVLKEANQQIEKFSKKSHIWKFVSVGNDKILFHEVNEKLRDVWEELLLLLQVYHWNTVSDVSQPASWQQEDRQDAEEDGNENMKVILMQLQISVEEINKTLKQCSLKPTQEIPQDLQIKEIPKEHLGPPWTKLKTSKMSTIYRGEYHRSPVTIKVFNNPQAESVGIVRFTFNDEIKTMKKFDSPNILRIFGICIDQTVKPPEFSIVMEYCELGTLRELLDREKDLTMSVRSLLVLRAARGLYRLHHSETLHRNISSSSFLVAGGYQVKLAGFELSKTQNSISRTAKSTKAERSSSTIYVSPERLKNPFCLYDIKAEIYSFGIVLWEIATGKIPFEGCDSKKIRELVAEDKKQEPVGQDCPELLREIINECRAHEPSQRPSVDGRSLSGRERILERLSAVEESTDKKV.

The tract at residues 1–143 (MDKLGQIIKL…QEDRQDAEED (143 aa)) is N-terminal bundle and brace (NBB); mediates INSP6 binding. Residues 61–81 (LGRFDEVLKEANQQIEKFSKK) are a coiled coil. Position 124 is a phosphoserine (Ser-124). The stretch at 138–229 (QDAEEDGNEN…VFNNPQAESV (92 aa)) forms a coiled coil. The Protein kinase domain maps to 192-456 (GPPWTKLKTS…DGRSLSGRER (265 aa)). Residues 198–206 (LKTSKMSTI) and Lys-219 each bind ATP. A phosphoserine; by RIPK3 mark is found at Ser-345 and Ser-347. Residue Thr-349 is modified to Phosphothreonine; by RIPK3. Position 352 is a phosphoserine; by RIPK3 (Ser-352).

The protein belongs to the protein kinase superfamily. As to quaternary structure, homooligomer. Homotrimer; forms homotrimers on necroptosis induction. Upon TNF-induced necrosis, forms in complex with PGAM5, RIPK1 and RIPK3. Within this complex, may play a role in the proper targeting of RIPK1-RIPK3 to its downstream effector PGAM5. Interacts with RIPK3; the interaction is direct and promotes its phosphorylation and subsequent activation. Post-translationally, phosphorylation by RIPK3 induces a conformational switch that is required for necroptosis. It also induces homotrimerization and localization to the plasma membrane. In terms of tissue distribution, highly expressed in thymus, colon, intestine, liver, spleen and lung. Expressed at much lower level in skeletal muscle, heart and kidney. Not detected in brain.

The protein localises to the cytoplasm. It localises to the cell membrane. It is found in the nucleus. Activated via binding to highly phosphorylated inositol phosphates such as inositolhexakisphosphate (InsP6) which mediates the release of an N-terminal auto-inhibitory region. Activation requires not only RIPK3-dependent phosphorylation but also binding to highly phosphorylated inositol phosphates. Functionally, pseudokinase that plays a key role in TNF-induced necroptosis, a programmed cell death process. Does not have protein kinase activity. Activated following phosphorylation by RIPK3, leading to homotrimerization, localization to the plasma membrane and execution of programmed necrosis characterized by calcium influx and plasma membrane damage. In addition to TNF-induced necroptosis, necroptosis can also take place in the nucleus in response to orthomyxoviruses infection: following ZBP1 activation, which senses double-stranded Z-RNA structures, nuclear RIPK3 catalyzes phosphorylation and activation of MLKL, promoting disruption of the nuclear envelope and leakage of cellular DNA into the cytosol. Binds to highly phosphorylated inositol phosphates such as inositolhexakisphosphate (InsP6) which is essential for its necroptotic function. The protein is Mixed lineage kinase domain-like protein of Mus musculus (Mouse).